Here is a 151-residue protein sequence, read N- to C-terminus: Actin-depolymerizing factor 10 (151 aa).

The ADF-H domain maps to Pro15–Asn149.

It belongs to the actin-binding proteins ADF family.

In terms of biological role, actin-depolymerizing protein. Severs actin filaments (F-actin) and binds to actin monomers. The sequence is that of Actin-depolymerizing factor 10 (ADF10) from Oryza sativa subsp. japonica (Rice).